A 299-amino-acid chain; its full sequence is Aspartate carbamoyltransferase catalytic subunit (299 aa).

Residues Arg54 and Thr55 each coordinate carbamoyl phosphate. Lys83 lines the L-aspartate pocket. Carbamoyl phosphate-binding residues include Arg104, His132, and Gln135. Residues Arg165 and Arg222 each contribute to the L-aspartate site. 2 residues coordinate carbamoyl phosphate: Leu261 and Pro262.

This sequence belongs to the aspartate/ornithine carbamoyltransferase superfamily. ATCase family. As to quaternary structure, heterooligomer of catalytic and regulatory chains.

It carries out the reaction carbamoyl phosphate + L-aspartate = N-carbamoyl-L-aspartate + phosphate + H(+). Its pathway is pyrimidine metabolism; UMP biosynthesis via de novo pathway; (S)-dihydroorotate from bicarbonate: step 2/3. In terms of biological role, catalyzes the condensation of carbamoyl phosphate and aspartate to form carbamoyl aspartate and inorganic phosphate, the committed step in the de novo pyrimidine nucleotide biosynthesis pathway. The polypeptide is Aspartate carbamoyltransferase catalytic subunit (Archaeoglobus fulgidus (strain ATCC 49558 / DSM 4304 / JCM 9628 / NBRC 100126 / VC-16)).